The sequence spans 303 residues: Caspase-7 (303 aa).

A compositionally biased stretch (acidic residues) spans 1–21; that stretch reads MADDQGCIEEQGVEDSANEDS. A disordered region spans residues 1–30; it reads MADDQGCIEEQGVEDSANEDSVDAKPDRSS. Ala-2 is modified (N-acetylalanine). The propeptide at 2–23 is N-terminally processed; sequence ADDQGCIEEQGVEDSANEDSVD. Ser-30 bears the Phosphoserine; by PAK2 mark. Phosphoserine is present on Ser-37. The interval 38 to 41 is exosite; that stretch reads KKKK. The segment at 76-87 is loop L1; sequence KNFDKVTGMGVR. Residue His-144 is part of the active site. A Phosphothreonine; by PAK2 modification is found at Thr-173. Residue Cys-186 is part of the active site. The tract at residues 187–196 is loop L2; the sequence is RGTELDDGIQ. Positions 199 to 206 are excised as a propeptide; the sequence is SGPINDTD. The interval 226 to 238 is loop L3; sequence VPGYYSWRSPGRG. Residue Arg-233 is modified to (Microbial infection) ADP-riboxanated arginine. The residue at position 239 (Ser-239) is a Phosphoserine; by PAK2. Residues 274 to 288 are loop L4; the sequence is ESQSDDPHFHEKKQI.

This sequence belongs to the peptidase C14A family. Heterotetramer that consists of two anti-parallel arranged heterodimers, each one formed by a 20 kDa (p20) and a 11 kDa (p11) subunit. Interacts with XIAP (via its second BIR domain); inhibiting CASP7 activity. Interacts with BIRC6/bruce. Interacts with ATXN3 (short isoform 1). Interacts with HSPA5. In terms of processing, cleavage by different proteases, such as granzyme B (GZMB), caspase-1 (CASP1), caspase-8 (CASP8), caspase-9 (CASP9) or caspase-10 (CASP10) generate the two active subunits. Its involvement in different programmed cell death processes is probably specified by the protease that activates CASP7. Cleaved and activated by initiator caspases (CASP8, CASP9 and/or CASP10), leading to execution phase of apoptosis. Cleavage and maturation by GZMB regulates granzyme-mediated programmed cell death. Cleaved and activated by CASP1 in response to bacterial infection. Propeptide domains can also be cleaved efficiently by CASP3. Active heterodimers between the small subunit of caspase-7 and the large subunit of CASP3, and vice versa, also occur. Also cleaved at the N-terminus at alternative sites by CAPN1, leading to its activation. Phosphorylation at Ser-30 and Ser-239 by PAK2 inhibits its activity. Phosphorylation at Ser-30 prevents cleavage and activation by initiator caspase CASP9, while phosphorylation at Ser-239 prevents thiol protease activity by preventing substrate-binding. Post-translationally, (Microbial infection) ADP-riboxanation by C.violaceum CopC blocks CASP7 processing, preventing CASP7 activation and ability to recognize and cleave substrates. In terms of processing, ubiquitinated by BIRC6; this activity is inhibited by DIABLO/SMAC. In terms of tissue distribution, highly expressed in lung, skeletal muscle, liver, kidney, spleen and heart, and moderately in testis. No expression in the brain.

Its subcellular location is the cytoplasm. The protein localises to the cytosol. It is found in the nucleus. The protein resides in the secreted. It localises to the extracellular space. The enzyme catalyses Strict requirement for an Asp residue at position P1 and has a preferred cleavage sequence of Asp-Glu-Val-Asp-|-.. With respect to regulation, during activation, the N-terminal disordered prodomain is removed by cleavage. Concomitantly, double cleavage gives rise to a large Caspase-7 subunit p20 and a small Caspase-7 subunit p11. The two large and two small subunits then assemble to form the active CASP7 complex. Can be cleaved and activated by different caspases, depending on the context. Cleaved and activated by initiator caspases (CASP8, CASP9 and/or CASP10), leading to execution phase of apoptosis. Inhibited by XIAP, which directly binds to the active site pocket and obstructs substrate entry. Cleavage and maturation by GZMB regulates granzyme-mediated programmed cell death. Cleavage and maturation by CASP1 regulates pyroptosis. Phosphorylation at Ser-30 and Ser-239 by PAK2 inhibits its activity. Inhibited by isatin sulfonamides. Inhibited by 2-(2,4-Dichlorophenoxy)- N-(2-mercapto-ethyl)-acetamide (DICA) and 5-Fluoro-1H-indole-2- carboxylic acid (2-mercapto-ethyl)-amide (FICA) allosteric inhibitors, which disrupt an interaction between Arg-187 and Tyr-223. Specifically inhibited by DARPin D7.18 and D7.43, which specifically bind to the precursor CASP7 and prevent its processing and activation. Inhibited by BIRC6; following inhibition of BIRC6-caspase binding by DIABLO/SMAC, BIRC6 is subjected to caspase cleavage, leading to an increase in active caspases. Thiol protease involved in different programmed cell death processes, such as apoptosis, pyroptosis or granzyme-mediated programmed cell death, by proteolytically cleaving target proteins. Has a marked preference for Asp-Glu-Val-Asp (DEVD) consensus sequences, with some plasticity for alternate non-canonical sequences. Its involvement in the different programmed cell death processes is probably determined by upstream proteases that activate CASP7. Acts as an effector caspase involved in the execution phase of apoptosis: following cleavage and activation by initiator caspases (CASP8, CASP9 and/or CASP10), mediates execution of apoptosis by catalyzing cleavage of proteins, such as CLSPN, PARP1, PTGES3 and YY1. Compared to CASP3, acts as a minor executioner caspase and cleaves a limited set of target proteins. Acts as a key regulator of the inflammatory response in response to bacterial infection by catalyzing cleavage and activation of the sphingomyelin phosphodiesterase SMPD1 in the extracellular milieu, thereby promoting membrane repair. Regulates pyroptosis in intestinal epithelial cells: cleaved and activated by CASP1 in response to S.typhimurium infection, promoting its secretion to the extracellular milieu, where it catalyzes activation of SMPD1, generating ceramides that repair membranes and counteract the action of gasdermin-D (GSDMD) pores. Regulates granzyme-mediated programmed cell death in hepatocytes: cleaved and activated by granzyme B (GZMB) in response to bacterial infection, promoting its secretion to the extracellular milieu, where it catalyzes activation of SMPD1, generating ceramides that repair membranes and counteract the action of perforin (PRF1) pores. Following cleavage by CASP1 in response to inflammasome activation, catalyzes processing and inactivation of PARP1, alleviating the transcription repressor activity of PARP1. Acts as an inhibitor of type I interferon production during virus-induced apoptosis by mediating cleavage of antiviral proteins CGAS, IRF3 and MAVS, thereby preventing cytokine overproduction. Cleaves and activates sterol regulatory element binding proteins (SREBPs). Cleaves phospholipid scramblase proteins XKR4, XKR8 and XKR9. In case of infection, catalyzes cleavage of Kaposi sarcoma-associated herpesvirus protein ORF57, thereby preventing expression of viral lytic genes. Cleaves BIRC6 following inhibition of BIRC6-caspase binding by DIABLO/SMAC. Functionally, lacks enzymatic activity. This chain is Caspase-7, found in Homo sapiens (Human).